We begin with the raw amino-acid sequence, 502 residues long: Lysine--tRNA ligase (502 aa).

2 residues coordinate Mg(2+): E411 and E418.

Belongs to the class-II aminoacyl-tRNA synthetase family. As to quaternary structure, homodimer. Mg(2+) is required as a cofactor.

The protein localises to the cytoplasm. It carries out the reaction tRNA(Lys) + L-lysine + ATP = L-lysyl-tRNA(Lys) + AMP + diphosphate. The chain is Lysine--tRNA ligase from Clostridium tetani (strain Massachusetts / E88).